A 418-amino-acid polypeptide reads, in one-letter code: Zinc finger protein 566 (418 aa).

Residues 6-77 (VMFSDVSVDF…DRELTRGQWP (72 aa)) form the KRAB domain. The C2H2-type 1; degenerate zinc-finger motif lies at 169–193 (KFCASKEYRKTFRHGSQFATHEIIH). C2H2-type zinc fingers lie at residues 199 to 221 (YECK…QKIH), 227 to 249 (FECK…HRIH), 255 to 277 (YECK…QRIH), 283 to 305 (YECK…QRIH), 311 to 333 (YECK…QRIH), 339 to 361 (YECK…QRIH), and 367 to 389 (YECK…HRIH). Glycyl lysine isopeptide (Lys-Gly) (interchain with G-Cter in SUMO2) cross-links involve residues lysine 314 and lysine 328.

It belongs to the krueppel C2H2-type zinc-finger protein family.

It localises to the nucleus. Functionally, may be involved in transcriptional regulation. The sequence is that of Zinc finger protein 566 (ZNF566) from Homo sapiens (Human).